The following is a 932-amino-acid chain: Lon protease homolog 2, peroxisomal (932 aa).

The Lon N-terminal domain occupies 11 to 260; sequence LSLVPLPKGS…RVVDILNKQN (250 aa). The interval 298 to 328 is disordered; it reads RRGIPGASGTPPPGLGGRNNEADEKESNELD. Over residues 317–328 the composition is skewed to basic and acidic residues; the sequence is NEADEKESNELD. 486 to 493 lines the ATP pocket; sequence GPPGTGKT. Residues 729 to 916 form the Lon proteolytic domain; the sequence is HGRPGVVTGL…WEAIRHIWPD (188 aa). Active-site residues include Ser-822 and Lys-865. A Microbody targeting signal motif is present at residues 930-932; that stretch reads SRL.

This sequence belongs to the peptidase S16 family.

Its subcellular location is the peroxisome matrix. It catalyses the reaction Hydrolysis of proteins in presence of ATP.. Functionally, ATP-dependent serine protease that mediates the selective degradation of misfolded and unassembled polypeptides in the peroxisomal matrix. Necessary for type 2 peroxisome targeting signal (PTS2)-containing protein processing and facilitates peroxisome matrix protein import. The protein is Lon protease homolog 2, peroxisomal of Emericella nidulans (strain FGSC A4 / ATCC 38163 / CBS 112.46 / NRRL 194 / M139) (Aspergillus nidulans).